The following is a 166-amino-acid chain: Cyanate hydratase (166 aa).

Residues arginine 106, glutamate 109, and serine 132 contribute to the active site.

This sequence belongs to the cyanase family.

It catalyses the reaction cyanate + hydrogencarbonate + 3 H(+) = NH4(+) + 2 CO2. In terms of biological role, catalyzes the reaction of cyanate with bicarbonate to produce ammonia and carbon dioxide. The sequence is that of Cyanate hydratase from Verticillium alfalfae (strain VaMs.102 / ATCC MYA-4576 / FGSC 10136) (Verticillium wilt of alfalfa).